Reading from the N-terminus, the 533-residue chain is GMP synthase [glutamine-hydrolyzing] (533 aa).

The region spanning 25 to 215 (SIVIFDFGSQ…VFNICKCHAN (191 aa)) is the Glutamine amidotransferase type-1 domain. Catalysis depends on cysteine 102, which acts as the Nucleophile. Catalysis depends on residues histidine 189 and glutamate 191. A GMPS ATP-PPase domain is found at 216-408 (WTMGNYIQES…LGLPDEMIWR (193 aa)). 243-249 (SGGVDSA) serves as a coordination point for ATP.

In terms of assembly, homodimer.

It carries out the reaction XMP + L-glutamine + ATP + H2O = GMP + L-glutamate + AMP + diphosphate + 2 H(+). It functions in the pathway purine metabolism; GMP biosynthesis; GMP from XMP (L-Gln route): step 1/1. In terms of biological role, catalyzes the synthesis of GMP from XMP. The protein is GMP synthase [glutamine-hydrolyzing] of Dehalococcoides mccartyi (strain CBDB1).